The chain runs to 62 residues: Protein translocase subunit SecE (62 aa).

A helical transmembrane segment spans residues 40–60 (LLVLAVVGVLAYIIQLALTLI).

Belongs to the SecE/SEC61-gamma family. As to quaternary structure, component of the Sec protein translocase complex. Heterotrimer consisting of SecY (alpha), SecG (beta) and SecE (gamma) subunits. The heterotrimers can form oligomers, although 1 heterotrimer is thought to be able to translocate proteins. Interacts with the ribosome. May interact with SecDF, and other proteins may be involved.

The protein resides in the cell membrane. In terms of biological role, essential subunit of the Sec protein translocation channel SecYEG. Clamps together the 2 halves of SecY. May contact the channel plug during translocation. The protein is Protein translocase subunit SecE of Saccharolobus solfataricus (strain ATCC 35092 / DSM 1617 / JCM 11322 / P2) (Sulfolobus solfataricus).